A 425-amino-acid chain; its full sequence is MTRLDSVERAVADIAAGKAVIVIDDEDRENEGDLIFAAEKATPEMVAFMVRYTSGYLCVPLDGAICDRLGLLPMYAVNQDKHGTAYTVTVDARNGVGTGISASDRATTMRLLADPTSIAEDFTRPGHVVPLRAKDGGVLRRPGHTEAAVDLARMAGLQPAGAICEIVSQKDEGSMAQTDELRVFADEHDLAMITIADLIEWRRKHEKHIERIAEARIPTRHGEFRAIGYTSIYEEVEHVALVRGEIAGPNSDGDDVLVRVHSECLTGDVFGSRRCDCGPQLDAAMAMVAREGRGIVLYMRGHEGRGIGLMHKLQAYQLQDAGEDTVDANLKLGFPADARDYGIGAQILVDLGVRSMRLLTNNPAKRVGLDGYGLHIIERVPLPVRANAENIRYLMTKRDKMGHDLAGLDDFHESVHLPGEFGGAL.

Residues 1–204 (MTRLDSVERA…IADLIEWRRK (204 aa)) are DHBP synthase. D-ribulose 5-phosphate contacts are provided by residues 28–29 (RE), D33, 141–145 (RPGHT), and E165. E29 is a binding site for Mg(2+). H144 contributes to the Mg(2+) binding site. A GTP cyclohydrolase II region spans residues 205-425 (HEKHIERIAE…HLPGEFGGAL (221 aa)). A GTP-binding site is contributed by 259-263 (RVHSE). 3 residues coordinate Zn(2+): C264, C275, and C277. GTP-binding positions include Q280, 303-305 (EGR), and T325. Residue D337 is the Proton acceptor; for GTP cyclohydrolase activity of the active site. The Nucleophile; for GTP cyclohydrolase activity role is filled by R339. GTP contacts are provided by T360 and K365.

It in the N-terminal section; belongs to the DHBP synthase family. This sequence in the C-terminal section; belongs to the GTP cyclohydrolase II family. Requires Mg(2+) as cofactor. Mn(2+) is required as a cofactor. It depends on Zn(2+) as a cofactor.

The catalysed reaction is D-ribulose 5-phosphate = (2S)-2-hydroxy-3-oxobutyl phosphate + formate + H(+). It carries out the reaction GTP + 4 H2O = 2,5-diamino-6-hydroxy-4-(5-phosphoribosylamino)-pyrimidine + formate + 2 phosphate + 3 H(+). It functions in the pathway cofactor biosynthesis; riboflavin biosynthesis; 2-hydroxy-3-oxobutyl phosphate from D-ribulose 5-phosphate: step 1/1. Its pathway is cofactor biosynthesis; riboflavin biosynthesis; 5-amino-6-(D-ribitylamino)uracil from GTP: step 1/4. Catalyzes the conversion of D-ribulose 5-phosphate to formate and 3,4-dihydroxy-2-butanone 4-phosphate. In terms of biological role, catalyzes the conversion of GTP to 2,5-diamino-6-ribosylamino-4(3H)-pyrimidinone 5'-phosphate (DARP), formate and pyrophosphate. In Mycobacterium avium (strain 104), this protein is Riboflavin biosynthesis protein RibBA.